A 184-amino-acid chain; its full sequence is Probable maltose O-acetyltransferase (184 aa).

Asn84 lines the acetyl-CoA pocket. His114 acts as the Proton donor/acceptor in catalysis. Residues Gly141, Ser159, 164 to 165, Arg179, and Lys182 each bind acetyl-CoA; that span reads TK.

This sequence belongs to the transferase hexapeptide repeat family. In terms of assembly, homodimer.

It carries out the reaction D-maltose + acetyl-CoA = 1-O-acetylmaltose + CoA. Catalyzes the CoA-dependent transfer of an acetyl group to maltose and other sugars. Acetylates glucose exclusively at the C6 position and maltose at the C6 position of the non-reducing end glucosyl moiety. Is able to acetylate maltooligosaccharides. In Bacillus subtilis (strain 168), this protein is Probable maltose O-acetyltransferase (maa).